A 145-amino-acid chain; its full sequence is Anaerobic nitrite reductase NSHB5 (145 aa).

A Globin domain is found at 2–142 (GFSETQEELV…LAAAIKEEMK (141 aa)). Positions 35-39 (EIAPA) match the Homodimerization motif. Residues Ser45, His59, Lys61, Arg84, Thr88, and His89 each coordinate heme b. Residues 96-108 (DAHFEVVKTALLD) carry the Homodimerization motif.

The protein belongs to the plant globin family. As to quaternary structure, homodimer. Heme b is required as a cofactor. As to expression, expressed in embryonic (embryos, coleoptiles and seminal roots) and vegetative (leaves and roots) organs.

It is found in the cytoplasm. It localises to the nucleus. The catalysed reaction is Fe(III)-heme b-[protein] + nitric oxide + H2O = Fe(II)-heme b-[protein] + nitrite + 2 H(+). Phytoglobin that reduces nitrite to nitric oxide under anoxic conditions (e.g. during flooding or in waterlogged soil). May not function as an oxygen storage or transport protein. Has an unusually high affinity for O(2) through an hexacoordinate heme iron because of a very low dissociation constant. This chain is Anaerobic nitrite reductase NSHB5, found in Oryza sativa subsp. indica (Rice).